The chain runs to 721 residues: Pre-mRNA-splicing ATP-dependent RNA helicase PRP28 (721 aa).

The disordered stretch occupies residues 12 to 134 (KKAADTAAAK…SAEDIEATLL (123 aa)). The segment covering 26–63 (PKAERERLAAEKAKKEEDDKKRKASEEEQKRKEEEQKW) has biased composition (basic and acidic residues). The span at 64–77 (RSNGSSRPNESNGS) shows a compositional bias: polar residues. The span at 88–104 (NDGRDDRERDRDRDQGR) shows a compositional bias: basic and acidic residues. Positions 288 to 316 (RSWQESNLPQRLLNIVDDVGYKDPSPIQR) match the Q motif motif. The Helicase ATP-binding domain maps to 319-522 (IPIALQARDL…KKYLRRPAIV (204 aa)). 332–339 (AVTGSGKT) is an ATP binding site. The short motif at 445–448 (DEAD) is the DEAD box element. A Helicase C-terminal domain is found at 533-696 (TVEQRVEFVS…KVPEELRRHE (164 aa)). The interval 685-721 (ISKVPEELRRHEAAQSKPVRGAKKDKDEGSGKGNWQH) is disordered. The span at 688–698 (VPEELRRHEAA) shows a compositional bias: basic and acidic residues.

Belongs to the DEAD box helicase family. DDX23/PRP28 subfamily. Component of the U5 snRNP complex.

It localises to the cytoplasm. The protein resides in the nucleus. The catalysed reaction is ATP + H2O = ADP + phosphate + H(+). In terms of biological role, ATP-dependent RNA helicase involved in mRNA splicing. May destabilize the U1/5'-splice site duplex to permit an effective competition for the 5'-splice site by the U6 snRNA, resulting in the switch between U1 and U6 at the 5'-splice site. May also act to unwind the U4/U6 base-pairing interaction in the U4/U6/U5 snRNP, facilitating the first covalent step of splicing. The sequence is that of Pre-mRNA-splicing ATP-dependent RNA helicase PRP28 (PRP28) from Gibberella zeae (strain ATCC MYA-4620 / CBS 123657 / FGSC 9075 / NRRL 31084 / PH-1) (Wheat head blight fungus).